The chain runs to 1143 residues: Disease resistance protein Pik-1 (1143 aa).

The structured coiled coil (CC) domain stretch occupies residues 1–190 (MEAAAMAVTA…PLRIMGGEMQ (190 aa)). The HMA domain occupies 189–258 (MQKIVFKIPM…KVGHAELLQV (70 aa)). The tract at residues 191-264 (KIVFKIPMVD…LLQVSQVKED (74 aa)) is HMA-like domain. The region spanning 282 to 570 (HEVKTICILG…WIAEGFVSEE (289 aa)) is the NB-ARC domain. LRR repeat units follow at residues 681-706 (FKRL…ICEQ), 708-731 (SLRV…MRKL), 732-754 (KHLE…IGEL), 756-777 (HLRI…IREL), 778-800 (QHLH…VGKL), 802-823 (NLKI…IGEL), 824-848 (NHLQ…QISQ), 945-968 (MPNL…INGT), 979-1002 (DSRL…EFKF), and 1004-1027 (AGPA…VFRC).

The protein belongs to the disease resistance NB-LRR family. As to quaternary structure, interacts with AVR-Pik through its N-terminal part containing the HMA-like domain.

Its function is as follows. Disease resistance (R) protein that specifically recognizes the AVR-Pik effector avirulence protein from M.oryzae. Resistance proteins guard the plant against pathogens that contain an appropriate avirulence protein via an indirect interaction with this avirulence protein. That triggers a defense system including the hypersensitive response, which restricts the pathogen growth. Contribution of Pik-2 is required to recognize the effector avirulence protein AVR-Pik. The protein is Disease resistance protein Pik-1 of Oryza sativa subsp. japonica (Rice).